We begin with the raw amino-acid sequence, 167 residues long: Ribosome rescue factor SmrB (167 aa).

One can recognise a Smr domain in the interval 91-166 (LDLHGLTREQ…GEAAILILVD (76 aa)).

This sequence belongs to the SmrB family. Associates with collided ribosomes, but not with correctly translating polysomes.

In terms of biological role, acts as a ribosome collision sensor. Detects stalled/collided disomes (pairs of ribosomes where the leading ribosome is stalled and a second ribosome has collided with it) and endonucleolytically cleaves mRNA at the 5' boundary of the stalled ribosome. Stalled/collided disomes form a new interface (primarily via the 30S subunits) that binds SmrB. Cleaved mRNA becomes available for tmRNA ligation, leading to ribosomal subunit dissociation and rescue of stalled ribosomes. This Haemophilus influenzae (strain ATCC 51907 / DSM 11121 / KW20 / Rd) protein is Ribosome rescue factor SmrB.